Reading from the N-terminus, the 79-residue chain is Small ribosomal subunit protein bS18 (79 aa).

Belongs to the bacterial ribosomal protein bS18 family. As to quaternary structure, part of the 30S ribosomal subunit. Forms a tight heterodimer with protein bS6.

Binds as a heterodimer with protein bS6 to the central domain of the 16S rRNA, where it helps stabilize the platform of the 30S subunit. The chain is Small ribosomal subunit protein bS18 from Salinispora arenicola (strain CNS-205).